The sequence spans 137 residues: Small ribosomal subunit protein uS12 (137 aa).

Aspartate 89 is subject to 3-methylthioaspartic acid. The segment at 104-137 is disordered; the sequence is TAGVNGRKQSRSKYGAKRPKPGQAAAAPAKGKKK. Basic residues predominate over residues 111–123; it reads KQSRSKYGAKRPK. The segment covering 124 to 137 has biased composition (low complexity); sequence PGQAAAAPAKGKKK.

This sequence belongs to the universal ribosomal protein uS12 family. As to quaternary structure, part of the 30S ribosomal subunit. Contacts proteins S8 and S17. May interact with IF1 in the 30S initiation complex.

With S4 and S5 plays an important role in translational accuracy. Functionally, interacts with and stabilizes bases of the 16S rRNA that are involved in tRNA selection in the A site and with the mRNA backbone. Located at the interface of the 30S and 50S subunits, it traverses the body of the 30S subunit contacting proteins on the other side and probably holding the rRNA structure together. The combined cluster of proteins S8, S12 and S17 appears to hold together the shoulder and platform of the 30S subunit. The polypeptide is Small ribosomal subunit protein uS12 (Cytophaga hutchinsonii (strain ATCC 33406 / DSM 1761 / CIP 103989 / NBRC 15051 / NCIMB 9469 / D465)).